The primary structure comprises 199 residues: Prolactin (199 aa).

Cysteines 4 and 11 form a disulfide. Serine 26 is modified (phosphoserine). An N-linked (GlcNAc...) asparagine; partial glycan is attached at asparagine 31. Phosphoserine occurs at positions 34 and 90. Disulfide bonds link cysteine 58/cysteine 174 and cysteine 191/cysteine 199.

It belongs to the somatotropin/prolactin family. Interacts with PRLR.

The protein resides in the secreted. Functionally, prolactin acts primarily on the mammary gland by promoting lactation. In Camelus dromedarius (Dromedary), this protein is Prolactin (PRL).